The chain runs to 329 residues: MARRPLLEFEKPLIELEQQIEQIRQLARDSEVDVSQQLLQLETLAARRREEIFQNLTPAQKIQVARHPHRPSTLDFIQMFCDDWVELHGDRRGSDDQALVGGLGRIGDRSVVLLGHQKGRDTKENVARNFGMATPGGYRKALRLMEHADRFGLPIFAFIDTPGAYAGLLAEEQGQGEAIAVNLREMFRLRVPIIATVIGEGGSGGALGIGVADRLLMFEHSVYTVASPEACASILWRDAAKAPEAAAALRITGKDLLSLGVVDEVLAEPSGGNNWAPLEAGATLREALERNLSELLALPPQELRDQRYRKFRAMGRFIDQASSDADSAS.

In terms of domain architecture, CoA carboxyltransferase C-terminal spans 40-294 (QLETLAARRR…REALERNLSE (255 aa)).

Belongs to the AccA family. Acetyl-CoA carboxylase is a heterohexamer composed of biotin carboxyl carrier protein (AccB), biotin carboxylase (AccC) and two subunits each of ACCase subunit alpha (AccA) and ACCase subunit beta (AccD).

The protein localises to the cytoplasm. The catalysed reaction is N(6)-carboxybiotinyl-L-lysyl-[protein] + acetyl-CoA = N(6)-biotinyl-L-lysyl-[protein] + malonyl-CoA. It functions in the pathway lipid metabolism; malonyl-CoA biosynthesis; malonyl-CoA from acetyl-CoA: step 1/1. Component of the acetyl coenzyme A carboxylase (ACC) complex. First, biotin carboxylase catalyzes the carboxylation of biotin on its carrier protein (BCCP) and then the CO(2) group is transferred by the carboxyltransferase to acetyl-CoA to form malonyl-CoA. This chain is Acetyl-coenzyme A carboxylase carboxyl transferase subunit alpha, found in Synechococcus sp. (strain CC9311).